The following is a 385-amino-acid chain: ATP phosphoribosyltransferase regulatory subunit (385 aa).

It belongs to the class-II aminoacyl-tRNA synthetase family. HisZ subfamily. In terms of assembly, heteromultimer composed of HisG and HisZ subunits.

The protein resides in the cytoplasm. The protein operates within amino-acid biosynthesis; L-histidine biosynthesis; L-histidine from 5-phospho-alpha-D-ribose 1-diphosphate: step 1/9. Functionally, required for the first step of histidine biosynthesis. May allow the feedback regulation of ATP phosphoribosyltransferase activity by histidine. The sequence is that of ATP phosphoribosyltransferase regulatory subunit from Bordetella pertussis (strain Tohama I / ATCC BAA-589 / NCTC 13251).